Here is a 72-residue protein sequence, read N- to C-terminus: Translation initiation factor IF-1 (72 aa).

In terms of domain architecture, S1-like spans 1-72 (MAKEESIKMN…SKGRITYRAR (72 aa)).

The protein belongs to the IF-1 family. As to quaternary structure, component of the 30S ribosomal translation pre-initiation complex which assembles on the 30S ribosome in the order IF-2 and IF-3, IF-1 and N-formylmethionyl-tRNA(fMet); mRNA recruitment can occur at any time during PIC assembly.

It is found in the cytoplasm. In terms of biological role, one of the essential components for the initiation of protein synthesis. Stabilizes the binding of IF-2 and IF-3 on the 30S subunit to which N-formylmethionyl-tRNA(fMet) subsequently binds. Helps modulate mRNA selection, yielding the 30S pre-initiation complex (PIC). Upon addition of the 50S ribosomal subunit IF-1, IF-2 and IF-3 are released leaving the mature 70S translation initiation complex. The protein is Translation initiation factor IF-1 of Alkalilimnicola ehrlichii (strain ATCC BAA-1101 / DSM 17681 / MLHE-1).